A 116-amino-acid chain; its full sequence is Outer membrane protein assembly factor BamE (116 aa).

Positions 1 to 22 (MITMRCKMLTAAAVMLAMLTAG) are cleaved as a signal peptide. C23 carries N-palmitoyl cysteine lipidation. C23 carries the S-diacylglycerol cysteine lipid modification.

It belongs to the BamE family. In terms of assembly, part of the Bam complex, which is composed of the outer membrane protein BamA, and four lipoproteins BamB, BamC, BamD and BamE.

It is found in the cell outer membrane. In terms of biological role, part of the outer membrane protein assembly complex, which is involved in assembly and insertion of beta-barrel proteins into the outer membrane. The polypeptide is Outer membrane protein assembly factor BamE (Yersinia pestis).